Reading from the N-terminus, the 98-residue chain is MNVTLVEINIKPERVDEFLEVFRANHEGALREPGNLRFDVLQDPEVKTRFFIYEAYKDDEAVLAHKKTPHYLACVEKLEEMMSQPRQKRSFIGLLPQV.

Positions 2–91 constitute an ABM domain; the sequence is NVTLVEINIK…MSQPRQKRSF (90 aa).

This sequence belongs to the LsrG family. As to quaternary structure, homodimer.

The protein resides in the cytoplasm. The catalysed reaction is (2S)-2-hydroxy-3,4-dioxopentyl phosphate = 3-hydroxy-2,4-dioxopentyl phosphate. Involved in the degradation of phospho-AI-2, thereby terminating induction of the lsr operon and closing the AI-2 signaling cycle. Catalyzes the conversion of (4S)-4-hydroxy-5-phosphonooxypentane-2,3-dione (P-DPD) to 3-hydroxy-5-phosphonooxypentane-2,4-dione (P-HPD). In Klebsiella pneumoniae subsp. pneumoniae (strain ATCC 700721 / MGH 78578), this protein is (4S)-4-hydroxy-5-phosphonooxypentane-2,3-dione isomerase.